A 364-amino-acid chain; its full sequence is Putative F-box/kelch-repeat protein At1g12170 (364 aa).

Residues 1–50 (MMHVILPWELVEEILYRVPPLSLTRFKIVCKQWNTLFKSKSFVNNHLVRV) enclose the F-box domain. Kelch repeat units follow at residues 156–205 (SIYN…LNGN) and 328–364 (CVYI…IPVP).

The polypeptide is Putative F-box/kelch-repeat protein At1g12170 (Arabidopsis thaliana (Mouse-ear cress)).